The following is a 386-amino-acid chain: Endonuclease III homolog 2, chloroplastic (386 aa).

A chloroplast-targeting transit peptide spans 1 to 50 (MILTGAASTFPIVARVLNAMNRRMYAATTLSSAKSISAESLNLRSDSNSE). The disordered stretch occupies residues 44 to 66 (RSDSNSEAAHGASESETRVSLRK). The HhH domain occupies 252–278 (YDGDIPRTLEELLSLPGVGPKIAHLVL). The Nucleophile; for N-glycosylase activity role is filled by Lys-272. 4 residues coordinate [4Fe-4S] cluster: Cys-347, Cys-354, Cys-357, and Cys-363.

This sequence belongs to the Nth/MutY family. [4Fe-4S] cluster is required as a cofactor.

The protein localises to the plastid. Its subcellular location is the chloroplast stroma. It is found in the chloroplast nucleoid. The enzyme catalyses 2'-deoxyribonucleotide-(2'-deoxyribose 5'-phosphate)-2'-deoxyribonucleotide-DNA = a 3'-end 2'-deoxyribonucleotide-(2,3-dehydro-2,3-deoxyribose 5'-phosphate)-DNA + a 5'-end 5'-phospho-2'-deoxyribonucleoside-DNA + H(+). Bifunctional DNA N-glycosylase with associated apurinic/apyrimidinic (AP) lyase function that catalyzes the first step in base excision repair (BER), the primary repair pathway for the repair of oxidative DNA damage. The DNA N-glycosylase activity releases the damaged DNA base from DNA by cleaving the N-glycosidic bond, leaving an AP site. The AP lyase activity cleaves the phosphodiester bond 3' to the AP site by a beta-elimination. Primarily recognizes and repairs oxidative base damage of pyrimidines. This chain is Endonuclease III homolog 2, chloroplastic (NTH2), found in Arabidopsis thaliana (Mouse-ear cress).